Consider the following 181-residue polypeptide: Large ribosomal subunit protein uL5 (181 aa).

This sequence belongs to the universal ribosomal protein uL5 family. In terms of assembly, part of the 50S ribosomal subunit; part of the 5S rRNA/L5/L18/L25 subcomplex. Contacts the 5S rRNA and the P site tRNA. Forms a bridge to the 30S subunit in the 70S ribosome.

This is one of the proteins that bind and probably mediate the attachment of the 5S RNA into the large ribosomal subunit, where it forms part of the central protuberance. In the 70S ribosome it contacts protein S13 of the 30S subunit (bridge B1b), connecting the 2 subunits; this bridge is implicated in subunit movement. Contacts the P site tRNA; the 5S rRNA and some of its associated proteins might help stabilize positioning of ribosome-bound tRNAs. The polypeptide is Large ribosomal subunit protein uL5 (Sulfurimonas denitrificans (strain ATCC 33889 / DSM 1251) (Thiomicrospira denitrificans (strain ATCC 33889 / DSM 1251))).